Reading from the N-terminus, the 795-residue chain is Glutamine--tRNA ligase, cytoplasmic (795 aa).

The disordered stretch occupies residues 188-220 (ADNEKPTKKKEKKEKPAKVEEKKAVVETTAEPS). Basic and acidic residues predominate over residues 200–212 (KEKPAKVEEKKAV). A 'HIGH' region motif is present at residues 277-287 (PEPNGYLHIGH). ATP contacts are provided by residues 278 to 280 (EPN) and 284 to 290 (HIGHAKA). 2 residues coordinate L-glutamine: aspartate 310 and tyrosine 450. Residues threonine 469, 498 to 499 (RL), and 506 to 508 (MSK) contribute to the ATP site. Positions 505-509 (VMSKR) match the 'KMSKS' region motif.

Belongs to the class-I aminoacyl-tRNA synthetase family.

The protein resides in the cytoplasm. The protein localises to the cytosol. It catalyses the reaction tRNA(Gln) + L-glutamine + ATP = L-glutaminyl-tRNA(Gln) + AMP + diphosphate. The polypeptide is Glutamine--tRNA ligase, cytoplasmic (Arabidopsis thaliana (Mouse-ear cress)).